The primary structure comprises 359 residues: Fructose-bisphosphate aldolase (359 aa).

D-glyceraldehyde 3-phosphate is bound at residue serine 50. Catalysis depends on aspartate 83, which acts as the Proton donor. Histidine 84, aspartate 105, glutamate 142, and histidine 198 together coordinate Zn(2+). Dihydroxyacetone phosphate is bound at residue glycine 199. Zn(2+) is bound at residue histidine 232. Dihydroxyacetone phosphate is bound by residues 233–235 (GSS) and 275–278 (NIDT).

This sequence belongs to the class II fructose-bisphosphate aldolase family. In terms of assembly, homodimer. It depends on Zn(2+) as a cofactor.

It catalyses the reaction beta-D-fructose 1,6-bisphosphate = D-glyceraldehyde 3-phosphate + dihydroxyacetone phosphate. It participates in carbohydrate biosynthesis; Calvin cycle. It functions in the pathway carbohydrate degradation; glycolysis; D-glyceraldehyde 3-phosphate and glycerone phosphate from D-glucose: step 4/4. Catalyzes the aldol condensation of dihydroxyacetone phosphate (DHAP or glycerone-phosphate) with glyceraldehyde 3-phosphate (G3P) to form fructose 1,6-bisphosphate (FBP) in gluconeogenesis and the reverse reaction in glycolysis. The polypeptide is Fructose-bisphosphate aldolase (cbbA) (Rhizobium meliloti (strain 1021) (Ensifer meliloti)).